Reading from the N-terminus, the 95-residue chain is Protein TusB (95 aa).

This sequence belongs to the DsrH/TusB family. Heterohexamer, formed by a dimer of trimers. The hexameric TusBCD complex contains 2 copies each of TusB, TusC and TusD. The TusBCD complex interacts with TusE.

It localises to the cytoplasm. In terms of biological role, part of a sulfur-relay system required for 2-thiolation of 5-methylaminomethyl-2-thiouridine (mnm(5)s(2)U) at tRNA wobble positions. This Photorhabdus laumondii subsp. laumondii (strain DSM 15139 / CIP 105565 / TT01) (Photorhabdus luminescens subsp. laumondii) protein is Protein TusB.